The chain runs to 192 residues: Dynein axonemal light chain 1 (192 aa).

LRR repeat units lie at residues 49–70 (NCEK…NGLK), 71–92 (YLKI…EAVG), 94–115 (TLEE…HVMK), and 116–137 (KLKV…SKLG). Residues 150-192 (NPLEEKHTAEGNWMEEAVKRLPKLKKLDGNPVIKQEEEEGDES) form the LRRCT domain.

This sequence belongs to the dynein light chain LC1-type family. As to quaternary structure, interacts with DNAH5, a outer arm dynein heavy chain. Interacts with tubulin located within the A-tubule of the outer doublets in a ATP-independent manner.

The protein localises to the cytoplasm. It is found in the cytoskeleton. It localises to the cilium axoneme. Part of the multisubunit axonemal ATPase complexes that generate the force for cilia motility and govern beat frequency. Component of the outer arm dynein (ODA). May be involved in a mechanosensory feedback mechanism controlling ODA activity based on external conformational cues by tethering the outer arm dynein heavy chain (DNAH5) to the microtubule within the axoneme. This Xenopus laevis (African clawed frog) protein is Dynein axonemal light chain 1 (dnal1).